The primary structure comprises 486 residues: Membrane-bound lytic murein transglycosylase F (486 aa).

The N-terminal stretch at 1 to 21 (MTRIKLNYFVIGVVALLLALA) is a signal peptide. A non-LT domain region spans residues 22 to 268 (LWPNIPWRNG…RLEEKYLGHV (247 aa)). Positions 269 to 486 (GSFDYVDTKT…VVGPGWSINN (218 aa)) are LT domain. Residue Glu313 is part of the active site.

In the N-terminal section; belongs to the bacterial solute-binding protein 3 family. It in the C-terminal section; belongs to the transglycosylase Slt family.

The protein resides in the cell outer membrane. The enzyme catalyses Exolytic cleavage of the (1-&gt;4)-beta-glycosidic linkage between N-acetylmuramic acid (MurNAc) and N-acetylglucosamine (GlcNAc) residues in peptidoglycan, from either the reducing or the non-reducing ends of the peptidoglycan chains, with concomitant formation of a 1,6-anhydrobond in the MurNAc residue.. Functionally, murein-degrading enzyme that degrades murein glycan strands and insoluble, high-molecular weight murein sacculi, with the concomitant formation of a 1,6-anhydromuramoyl product. Lytic transglycosylases (LTs) play an integral role in the metabolism of the peptidoglycan (PG) sacculus. Their lytic action creates space within the PG sacculus to allow for its expansion as well as for the insertion of various structures such as secretion systems and flagella. The polypeptide is Membrane-bound lytic murein transglycosylase F (Yersinia enterocolitica serotype O:8 / biotype 1B (strain NCTC 13174 / 8081)).